A 454-amino-acid chain; its full sequence is Probable N-octanoylanthranilate hydrolase AqdA2 (454 aa).

Residue Ser185 is the Acyl-ester intermediate of the active site. Catalysis depends on charge relay system residues Glu306 and His379.

It belongs to the type-B carboxylesterase/lipase family.

The catalysed reaction is N-octanoylanthranilate + H2O = anthranilate + octanoate + H(+). Functionally, involved in the degradation of the Pseudomonas aeruginosa quorum sensing signal molecules HHQ (2-heptyl-4-quinolone) and PQS (2-heptyl-3-hydroxy-4-quinolone) to anthranilic acid. Probably catalyzes the hydrolysis of N-octanoylanthranilic acid to anthranilic acid. The sequence is that of Probable N-octanoylanthranilate hydrolase AqdA2 from Rhodococcus erythropolis (Arthrobacter picolinophilus).